Here is a 459-residue protein sequence, read N- to C-terminus: Aluminum-activated malate transporter 1 (459 aa).

At 1–52 the chain is on the extracellular side; the sequence is MDIDHGRESDGEMVGTIASCGLLLHSLLAGLGRRAAGFARKVGGAAREDPRR. The next 2 helical transmembrane spans lie at 53–73 and 74–94; these read VAHS…YFVT and PLFN…VVVM. Residues 95-108 are Extracellular-facing; that stretch reads EYTVGATLSKGLNR. The helical transmembrane segment at 109–129 threads the bilayer; it reads ALATLVAGCIAVGAHQLAELA. Topologically, residues 130 to 137 are cytoplasmic; the sequence is ERCGDQGE. A helical membrane pass occupies residues 138-158; sequence PIVLTVLVFFVASAATFLRFI. The Extracellular portion of the chain corresponds to 159–160; the sequence is PE. Residues 161-181 form a helical membrane-spanning segment; that stretch reads IKAKYDYGVTIFILTFGLVAV. The Cytoplasmic segment spans residues 182 to 199; sequence SSYRVEELIQLAHQRFYT. A helical transmembrane segment spans residues 200–220; it reads IAVGVFICLCTTVFLFPVWAG. Residues 221 to 459 lie on the Extracellular side of the membrane; it reads EDVHKLASGN…DEPLPDVVIL (239 aa).

Belongs to the aromatic acid exporter (TC 2.A.85) family. Detected in root tips.

It is found in the cell membrane. Activated by external aluminum. The enhancement of malate transport is not due to alteration in the selectivity properties but is due to an increased anion permeability. In terms of biological role, malate transporter critical for aluminum tolerance. Permeable to chloride, nitrate, sulfate and malate. In Triticum aestivum (Wheat), this protein is Aluminum-activated malate transporter 1 (ALMT1).